The sequence spans 541 residues: MESQRNILLIGLLFVSFLLWQQWQADKAPKPVATESSVVANATTNHSADVPEADTGVPAAMTATQNLITVKTDQLDVQINPVGGDIVFAALVSHKLEQGKDQPFVLLEQTKDFTYIAQSGLIGRDGIDSSAKGRAAFAASKTEFTLADGQDTLEVPLTYVADNGVTYTKVFVFHRGKFNVDIDYKINNTSAAPLQVQMYGQIKQTIKPSESSMMMPTYRGAAFSTQDVRYEKYKFEDMSKSNLNQPTLGGWAAMLQHYFVSAWIPPATDSNTIFSSVSAGGLANIGFRGAVYDIAPGATQEISSQFYVGPKDQKALSALSDTLNLVVDYGFLWWLAVPIHWLLMFYQSFVGNWGVAIILITLTVRGLLFPLTKAQYTSMAKMRNLQPKLQDLKERFGDDRQKMGQAMMELYKKEKVNPMGGCLPILLQMPIFIALYWVLLESFELRHAPFMLWIHDLSVQDPYYILPLLMGVSMFVMQKMQPIAPTMDPMQVKMMQWMPVIFTVFFLWFPSGLVLYWLVGNIVAIIQQKIIYAGLEKKGLK.

5 helical membrane passes run 6 to 26, 349 to 369, 420 to 440, 457 to 477, and 500 to 520; these read NILL…WQAD, FVGN…GLLF, GGCL…WVLL, LSVQ…MFVM, and VIFT…WLVG.

It belongs to the OXA1/ALB3/YidC family. Type 1 subfamily. In terms of assembly, interacts with the Sec translocase complex via SecD. Specifically interacts with transmembrane segments of nascent integral membrane proteins during membrane integration.

Its subcellular location is the cell inner membrane. Functionally, required for the insertion and/or proper folding and/or complex formation of integral membrane proteins into the membrane. Involved in integration of membrane proteins that insert both dependently and independently of the Sec translocase complex, as well as at least some lipoproteins. Aids folding of multispanning membrane proteins. The chain is Membrane protein insertase YidC from Shewanella sp. (strain MR-7).